The sequence spans 461 residues: Argininosuccinate lyase (461 aa).

The protein belongs to the lyase 1 family. Argininosuccinate lyase subfamily.

It is found in the cytoplasm. It catalyses the reaction 2-(N(omega)-L-arginino)succinate = fumarate + L-arginine. Its pathway is amino-acid biosynthesis; L-arginine biosynthesis; L-arginine from L-ornithine and carbamoyl phosphate: step 3/3. The sequence is that of Argininosuccinate lyase from Clostridium beijerinckii (strain ATCC 51743 / NCIMB 8052) (Clostridium acetobutylicum).